Reading from the N-terminus, the 148-residue chain is Large ribosomal subunit protein uL15 (148 aa).

The span at 1 to 11 shows a compositional bias: basic and acidic residues; the sequence is MSEPIKLHDLR. Positions 1–52 are disordered; sequence MSEPIKLHDLRPAAGSNKAKTRVGRGEASKGKTAGRGTKGTKARKQVSAAFE.

It belongs to the universal ribosomal protein uL15 family. In terms of assembly, part of the 50S ribosomal subunit.

Functionally, binds to the 23S rRNA. The sequence is that of Large ribosomal subunit protein uL15 from Corynebacterium glutamicum (strain R).